The primary structure comprises 329 residues: uncharacterized protein (329 aa).

Residues 56-247 (LNKEEQFQED…EAEKTHQAKL (192 aa)) adopt a coiled-coil conformation.

This is an uncharacterized protein from Bos taurus (Bovine).